Reading from the N-terminus, the 150-residue chain is MKEETALLATVTLLGVLLQAYFSLQVISARRTFHVSPPLTSGPPEFERVFRAQVNCSEYFPLFLATLWVAGIFFHEGAAALCGLFYLFARLRYFQGYARSAQHRLDPLYASARALWLLVAMAALGLLVHFLPGTLRAALFRWLQVLLPMA.

Topologically, residues 1–6 (MKEETA) are cytoplasmic. Residues 7-27 (LLATVTLLGVLLQAYFSLQVI) traverse the membrane as a helical segment. Topologically, residues 28–48 (SARRTFHVSPPLTSGPPEFER) are lumenal. Arg-30 is a binding site for glutathione. Arg-31 (proton donor) is an active-site residue. Ser-36 bears the Phosphoserine mark. Residues 49–69 (VFRAQVNCSEYFPLFLATLWV) traverse the membrane as a helical segment. Glutathione is bound by residues 51 to 55 (RAQVN) and 58 to 59 (EY). At 70-73 (AGIF) the chain is on the cytoplasmic side. The helical transmembrane segment at 74-94 (FHEGAAALCGLFYLFARLRYF) threads the bilayer. Residue 93-97 (YFQGY) participates in glutathione binding. The Lumenal segment spans residues 95 to 104 (QGYARSAQHR). Residue Arg-104 is the Proton acceptor of the active site. Residues 105–124 (LDPLYASARALWLLVAMAAL) form a helical membrane-spanning segment. Residues 125-150 (GLLVHFLPGTLRAALFRWLQVLLPMA) are Cytoplasmic-facing.

It belongs to the MAPEG family. In terms of assembly, homotrimer. Interacts with ALOX5AP and ALOX5. Phosphorylation at Ser-36 by RPS6KB1 inhibits the leukotriene-C4 synthase activity.

It is found in the nucleus outer membrane. The protein localises to the endoplasmic reticulum membrane. Its subcellular location is the nucleus membrane. The catalysed reaction is leukotriene C4 = leukotriene A4 + glutathione. It catalyses the reaction (13S,14S)-epoxy-(4Z,7Z,9E,11E,16Z,19Z)-docosahexaenoate + glutathione = (13R)-S-glutathionyl-(14S)-hydroxy-(4Z,7Z,9E,11E,16Z,19Z)-docosahexaenoate. It participates in lipid metabolism; leukotriene C4 biosynthesis. With respect to regulation, inhibited by MK886. Functionally, catalyzes the conjugation of leukotriene A4 with reduced glutathione (GSH) to form leukotriene C4 with high specificity. Can also catalyze the transfer of a glutathionyl group from glutathione (GSH) to 13(S),14(S)-epoxy-docosahexaenoic acid to form maresin conjugate in tissue regeneration 1 (MCTR1), a bioactive lipid mediator that possess potent anti-inflammatory and proresolving actions. The polypeptide is Leukotriene C4 synthase (Ltc4s) (Rattus norvegicus (Rat)).